The following is a 392-amino-acid chain: INCREASED PETAL GROWTH ANISOTROPY 1-like protein 1 (392 aa).

Residues 11–52 are a coiled coil; that stretch reads LLRLVKELQAYLVRNDKLEKENHELRQEVARLRAQVSNLKSH. Composition is skewed to polar residues over residues 65-76 and 100-109; these read QSSYDGSNTDGS and PTIQGQSTAT. The interval 65–128 is disordered; that stretch reads QSSYDGSNTD…SKRTLGKRSV (64 aa). Residues 269 to 299 are a coiled coil; that stretch reads KDSLTQALQRIQSLQDRLEESVNNTEKMRDS.

It belongs to the IPGA1 family.

Its subcellular location is the cytoplasm. It localises to the cytoskeleton. Functionally, microtubule-associated protein probably involved in the regulation of microtubule organization. The sequence is that of INCREASED PETAL GROWTH ANISOTROPY 1-like protein 1 from Arabidopsis thaliana (Mouse-ear cress).